The sequence spans 93 residues: DNA-binding protein HB1 (93 aa).

The protein belongs to the bacterial histone-like protein family. Homodimer.

Histone-like DNA-binding protein which is capable of wrapping DNA to stabilize it, and thus to prevent its denaturation under extreme environmental conditions. The polypeptide is DNA-binding protein HB1 (hup) (Bifidobacterium longum (strain NCC 2705)).